A 284-amino-acid chain; its full sequence is Avenin-like b5 (284 aa).

The N-terminal stretch at 1–18 (MKVFILALLALTATTAIA) is a signal peptide.

Belongs to the prolamin family. Post-translationally, contains disulfide bonds. In terms of tissue distribution, expressed only in developing endosperms. Not detected in roots, stems or leaves.

Seed storage protein. Might be integrated via inter-chain disulfide bonds within the glutenin polymer. This chain is Avenin-like b5, found in Triticum aestivum (Wheat).